A 204-amino-acid chain; its full sequence is UPF0637 protein SA0957 (204 aa).

This sequence belongs to the UPF0637 family.

The chain is UPF0637 protein SA0957 from Staphylococcus aureus (strain N315).